A 721-amino-acid polypeptide reads, in one-letter code: Catalase-peroxidase 1 (721 aa).

Positions 98–226 (WHAAGTYRIA…LAAVMMGLIY (129 aa)) form a cross-link, tryptophyl-tyrosyl-methioninium (Trp-Tyr) (with M-252). His-99 acts as the Proton acceptor in catalysis. The segment at residues 226–252 (YVNPEGVDGQPDPLKTAHDVRVTFARM) is a cross-link (tryptophyl-tyrosyl-methioninium (Tyr-Met) (with W-98)). His-267 contributes to the heme b binding site.

Belongs to the peroxidase family. Peroxidase/catalase subfamily. As to quaternary structure, homodimer or homotetramer. Heme b serves as cofactor. Formation of the three residue Trp-Tyr-Met cross-link is important for the catalase, but not the peroxidase activity of the enzyme.

It carries out the reaction H2O2 + AH2 = A + 2 H2O. It catalyses the reaction 2 H2O2 = O2 + 2 H2O. Its function is as follows. Bifunctional enzyme with both catalase and broad-spectrum peroxidase activity. The chain is Catalase-peroxidase 1 from Vibrio parahaemolyticus serotype O3:K6 (strain RIMD 2210633).